A 154-amino-acid chain; its full sequence is UPF0225 protein YE2246 (154 aa).

The protein belongs to the UPF0225 family.

In Yersinia enterocolitica serotype O:8 / biotype 1B (strain NCTC 13174 / 8081), this protein is UPF0225 protein YE2246.